The sequence spans 271 residues: Isoprenyl transferase (271 aa).

Aspartate 35 is a catalytic residue. Aspartate 35 lines the Mg(2+) pocket. Residues 36 to 39 (GNGR), tryptophan 40, arginine 48, histidine 52, and 80 to 82 (STE) contribute to the substrate site. Residue asparagine 83 is the Proton acceptor of the active site. Residues tryptophan 84, arginine 86, arginine 207, and 213–215 (RIS) each bind substrate. Glutamate 226 contacts Mg(2+).

The protein belongs to the UPP synthase family. Homodimer. The cofactor is Mg(2+).

In terms of biological role, catalyzes the condensation of isopentenyl diphosphate (IPP) with allylic pyrophosphates generating different type of terpenoids. This is Isoprenyl transferase from Enterococcus faecalis (strain ATCC 700802 / V583).